The primary structure comprises 307 residues: Pseudouridine-5'-phosphate glycosidase (307 aa).

E25 (proton donor) is an active-site residue. 2 residues coordinate substrate: K86 and V106. Residue D138 coordinates Mn(2+). Substrate is bound at residue 140–142; sequence SAD. The active-site Nucleophile is K159.

This sequence belongs to the pseudouridine-5'-phosphate glycosidase family. In terms of assembly, homotrimer. Mn(2+) serves as cofactor.

The enzyme catalyses D-ribose 5-phosphate + uracil = psi-UMP + H2O. Catalyzes the reversible cleavage of pseudouridine 5'-phosphate (PsiMP) to ribose 5-phosphate and uracil. Functions biologically in the cleavage direction, as part of a pseudouridine degradation pathway. The protein is Pseudouridine-5'-phosphate glycosidase of Caldanaerobacter subterraneus subsp. tengcongensis (strain DSM 15242 / JCM 11007 / NBRC 100824 / MB4) (Thermoanaerobacter tengcongensis).